A 174-amino-acid chain; its full sequence is Ribosome maturation factor RimM (174 aa).

The region spanning 97–173 is the PRC barrel domain; the sequence is GNKFYFHEVI…DLPVGLVEMY (77 aa).

The protein belongs to the RimM family. As to quaternary structure, binds ribosomal protein uS19.

The protein localises to the cytoplasm. Its function is as follows. An accessory protein needed during the final step in the assembly of 30S ribosomal subunit, possibly for assembly of the head region. Essential for efficient processing of 16S rRNA. May be needed both before and after RbfA during the maturation of 16S rRNA. It has affinity for free ribosomal 30S subunits but not for 70S ribosomes. The chain is Ribosome maturation factor RimM from Flavobacterium johnsoniae (strain ATCC 17061 / DSM 2064 / JCM 8514 / BCRC 14874 / CCUG 350202 / NBRC 14942 / NCIMB 11054 / UW101) (Cytophaga johnsonae).